The sequence spans 198 residues: Carnitine operon protein CaiE (198 aa).

The interval 179–198 (VEENRPRLKGTTDVKPKSAQ) is disordered. Residues 180 to 198 (EENRPRLKGTTDVKPKSAQ) show a composition bias toward basic and acidic residues.

Belongs to the transferase hexapeptide repeat family.

It functions in the pathway amine and polyamine metabolism; carnitine metabolism. Its function is as follows. Overproduction of CaiE stimulates the activity of CaiB and CaiD. The polypeptide is Carnitine operon protein CaiE (Salmonella enteritidis PT4 (strain P125109)).